The primary structure comprises 407 residues: Ran GTPase-activating protein 1 (407 aa).

11 LRR repeats span residues Glu11–Ala39, Ala40–Ala67, Glu68–Leu101, Pro102–Ala133, His134–Asn166, Lys167–Leu197, Lys198–Gly226, Leu227–Pro256, Thr257–Thr285, Glu286–Met315, and Glu316–Lys346. Residues Asp353–Glu378 form a disordered region. Ser360 carries the post-translational modification Phosphoserine.

It belongs to the RNA1 family.

It is found in the cytoplasm. Functionally, GTPase activator for the nuclear Ras-related regulatory protein GSP1 (Ran), converting it to the putatively inactive GDP-bound state. This Saccharomyces cerevisiae (strain ATCC 204508 / S288c) (Baker's yeast) protein is Ran GTPase-activating protein 1 (RNA1).